The chain runs to 91 residues: Putative pterin-4-alpha-carbinolamine dehydratase (91 aa).

This sequence belongs to the pterin-4-alpha-carbinolamine dehydratase family.

The catalysed reaction is (4aS,6R)-4a-hydroxy-L-erythro-5,6,7,8-tetrahydrobiopterin = (6R)-L-erythro-6,7-dihydrobiopterin + H2O. This Halobacterium salinarum (strain ATCC 29341 / DSM 671 / R1) protein is Putative pterin-4-alpha-carbinolamine dehydratase.